Consider the following 49-residue polypeptide: Multidrug efflux pump accessory protein AcrZ (49 aa).

At 1-7 (MLELLKS) the chain is on the periplasmic side. The chain crosses the membrane as a helical span at residues 8 to 28 (LVFAVIMVPVVMAIILGLIYG). The Cytoplasmic portion of the chain corresponds to 29–49 (LGEVFNIFSGVGKKDQPGQNH).

The protein belongs to the AcrZ family. In terms of assembly, part of the AcrA-AcrB-AcrZ-TolC efflux pump, interacts directly with AcrB.

The protein resides in the cell inner membrane. Functionally, acrA-AcrB-AcrZ-TolC is a drug efflux protein complex with a broad substrate specificity. This protein binds to AcrB and is required for efflux of some but not all substrates, suggesting it may influence the specificity of drug export. The protein is Multidrug efflux pump accessory protein AcrZ of Escherichia coli O157:H7.